Here is a 926-residue protein sequence, read N- to C-terminus: Periplasmic nitrate reductase (926 aa).

The segment at residues 1–30 is a signal peptide (tat-type signal); that stretch reads MNRRDFIKSAAASAACASAGIAIPANLSAA. One can recognise a 4Fe-4S Mo/W bis-MGD-type domain in the interval 37–93; it reads WRWDKAACRFCGTGCGIMVATKEGKIVAVKGDPEAPVNRGLNCIKGYFNAKIMYGED. The [4Fe-4S] cluster site is built by Cys-44, Cys-47, Cys-51, and Cys-79. Mo-bis(molybdopterin guanine dinucleotide) is bound by residues Lys-81, Gln-149, Asn-174, Cys-178, 211–218, Met-419, Gln-423, Asn-529, 554–555, Lys-577, Asp-604, and 816–825; these read WGANMAEM, SD, and TGRVLEHWHS. Trp-892 provides a ligand contact to substrate. 2 residues coordinate Mo-bis(molybdopterin guanine dinucleotide): Asn-900 and Lys-917.

Belongs to the prokaryotic molybdopterin-containing oxidoreductase family. NasA/NapA/NarB subfamily. In terms of assembly, component of the periplasmic nitrate reductase NapAB complex composed of NapA and NapB. It depends on [4Fe-4S] cluster as a cofactor. Mo-bis(molybdopterin guanine dinucleotide) serves as cofactor. In terms of processing, predicted to be exported by the Tat system. The position of the signal peptide cleavage has not been experimentally proven.

It is found in the periplasm. It catalyses the reaction 2 Fe(II)-[cytochrome] + nitrate + 2 H(+) = 2 Fe(III)-[cytochrome] + nitrite + H2O. Functionally, catalytic subunit of the periplasmic nitrate reductase complex NapAB. Receives electrons from NapB and catalyzes the reduction of nitrate to nitrite. The sequence is that of Periplasmic nitrate reductase from Campylobacter curvus (strain 525.92).